The primary structure comprises 231 residues: MHIMEGYLPIGWCIFWAVLSAPFVIYGIWKMTKMIQEDRRVLPLMAVCGAFVFVLSALKIPSVTGSCSHPTGTGLSAAFFGPFITSVLGTIVLLFQALLLAHGGLTTLGANVFSMAIAGPFIAWLVFVGLRKTGKVGIGVAVFITAAVANLVTYTVTSLQLALVFPVEGSILNAFIAFAGIFAVTQIPLAIIEGIICALVAKYIVRVKPEILKKLGIIQDEEIAKIQGEAV.

The next 6 membrane-spanning stretches (helical) occupy residues 8 to 28, 41 to 61, 75 to 95, 108 to 128, 136 to 156, and 176 to 196; these read LPIG…IYGI, VLPL…LKIP, LSAA…VLLF, LGAN…LVFV, VGIG…TYTV, and IAFA…EGII.

Belongs to the CbiM family. As to quaternary structure, forms an energy-coupling factor (ECF) transporter complex composed of an ATP-binding protein (A component, CbiO), a transmembrane protein (T component, CbiQ) and 2 possible substrate-capture proteins (S components, CbiM and CbiN) of unknown stoichimetry.

The protein resides in the cell membrane. Its pathway is cofactor biosynthesis; adenosylcobalamin biosynthesis. In terms of biological role, part of the energy-coupling factor (ECF) transporter complex CbiMNOQ involved in cobalt import. The protein is Putative cobalt transport protein CbiM 2 of Methanocorpusculum labreanum (strain ATCC 43576 / DSM 4855 / Z).